We begin with the raw amino-acid sequence, 107 residues long: Period circadian protein (107 aa).

The segment at 81-107 (ITNGSNTGTGTSSGSFQPPLLTEALLN) is disordered. Residues 82–95 (TNGSNTGTGTSSGS) are compositionally biased toward low complexity.

In terms of assembly, forms a heterodimer with timeless (TIM); the complex then translocates into the nucleus. In terms of processing, phosphorylated with a circadian rhythmicity, probably by the double-time protein (dbt). Phosphorylation could be implicated in the stability of per monomer and in the formation of heterodimer per-tim.

It localises to the nucleus. Its subcellular location is the cytoplasm. It is found in the perinuclear region. Its function is as follows. Essential for biological clock functions. Determines the period length of circadian and ultradian rhythms; an increase in PER dosage leads to shortened circadian rhythms and a decrease leads to lengthened circadian rhythms. Essential for the circadian rhythmicity of locomotor activity, eclosion behavior, and for the rhythmic component of the male courtship song that originates in the thoracic nervous system. The biological cycle depends on the rhythmic formation and nuclear localization of the TIM-PER complex. Light induces the degradation of TIM, which promotes elimination of PER. Nuclear activity of the heterodimer coordinatively regulates PER and TIM transcription through a negative feedback loop. Behaves as a negative element in circadian transcriptional loop. Does not appear to bind DNA, suggesting indirect transcriptional inhibition. This chain is Period circadian protein (per), found in Beris vallata (Common orange legionnaire).